Reading from the N-terminus, the 52-residue chain is uncharacterized protein (52 aa).

The tract at residues 1-52 is disordered; sequence MSLRPCLTPSSMQYSDIYIPTPTPTHHTHTPTPHPHPHTHTHTHHNPNPTLF. A compositionally biased stretch (basic residues) spans 35 to 45; that stretch reads PHPHTHTHTHH.

This is an uncharacterized protein from Saccharomyces cerevisiae (strain ATCC 204508 / S288c) (Baker's yeast).